The primary structure comprises 562 residues: Arginine--tRNA ligase 1 (562 aa).

A 'HIGH' region motif is present at residues 122–132; that stretch reads PNIAKPFSMGH.

This sequence belongs to the class-I aminoacyl-tRNA synthetase family. Monomer.

It localises to the cytoplasm. The catalysed reaction is tRNA(Arg) + L-arginine + ATP = L-arginyl-tRNA(Arg) + AMP + diphosphate. This Bacillus thuringiensis subsp. konkukian (strain 97-27) protein is Arginine--tRNA ligase 1.